Consider the following 586-residue polypeptide: Putative Lon protease homolog (586 aa).

One can recognise a Lon proteolytic domain in the interval 346–543; sequence GERIGQINAL…TDALPLLLNL (198 aa). Residues S438 and K481 contribute to the active site.

It belongs to the peptidase S16 family.

This is Putative Lon protease homolog (ycbZ) from Escherichia coli (strain K12).